Here is a 333-residue protein sequence, read N- to C-terminus: NADH-quinone oxidoreductase subunit H (333 aa).

Helical transmembrane passes span 15–35 (IALF…FVTY), 88–108 (YVLA…VLPF), 117–137 (IGVG…GVVA), 165–185 (LVMS…VDIV), 191–211 (VWFI…AVAE), 241–261 (FFML…TILF), 274–294 (IPGA…LIWF), and 313–333 (VLLP…AWFF).

Belongs to the complex I subunit 1 family. NDH-1 is composed of 14 different subunits. Subunits NuoA, H, J, K, L, M, N constitute the membrane sector of the complex.

The protein resides in the cell membrane. The enzyme catalyses a quinone + NADH + 5 H(+)(in) = a quinol + NAD(+) + 4 H(+)(out). NDH-1 shuttles electrons from NADH, via FMN and iron-sulfur (Fe-S) centers, to quinones in the respiratory chain. The immediate electron acceptor for the enzyme in this species is believed to be ubiquinone. Couples the redox reaction to proton translocation (for every two electrons transferred, four hydrogen ions are translocated across the cytoplasmic membrane), and thus conserves the redox energy in a proton gradient. This subunit may bind ubiquinone. The sequence is that of NADH-quinone oxidoreductase subunit H from Geobacillus kaustophilus (strain HTA426).